The chain runs to 451 residues: Heme sensor protein HssS (451 aa).

Transmembrane regions (helical) follow at residues Ile9–Asn29 and Ile164–Ser184. The HAMP domain occupies Tyr186–Gln238. Residues Asn246 to Ile451 enclose the Histidine kinase domain. The residue at position 249 (His249) is a Phosphohistidine; by autocatalysis.

In terms of processing, autophosphorylated.

The protein resides in the cell membrane. It catalyses the reaction ATP + protein L-histidine = ADP + protein N-phospho-L-histidine.. Member of the two-component regulatory system HssS/HssR involved in intracellular heme homeostasis and tempering of staphylococcal virulence. HssS functions as a heme sensor histidine kinase which is autophosphorylated at a histidine residue and transfers its phosphate group to an aspartate residue of HssR. HssR/HssS activates the expression of HrtAB, an efflux pump, in response to extracellular heme, hemin, hemoglobin or blood. This chain is Heme sensor protein HssS (hssS), found in Staphylococcus epidermidis (strain ATCC 12228 / FDA PCI 1200).